We begin with the raw amino-acid sequence, 290 residues long: 4-hydroxy-tetrahydrodipicolinate synthase (290 aa).

Thr-44 provides a ligand contact to pyruvate. The active-site Proton donor/acceptor is Tyr-132. Lys-160 functions as the Schiff-base intermediate with substrate in the catalytic mechanism. Residue Ile-202 participates in pyruvate binding.

The protein belongs to the DapA family. As to quaternary structure, homotetramer; dimer of dimers.

The protein localises to the cytoplasm. It carries out the reaction L-aspartate 4-semialdehyde + pyruvate = (2S,4S)-4-hydroxy-2,3,4,5-tetrahydrodipicolinate + H2O + H(+). It functions in the pathway amino-acid biosynthesis; L-lysine biosynthesis via DAP pathway; (S)-tetrahydrodipicolinate from L-aspartate: step 3/4. Catalyzes the condensation of (S)-aspartate-beta-semialdehyde [(S)-ASA] and pyruvate to 4-hydroxy-tetrahydrodipicolinate (HTPA). The chain is 4-hydroxy-tetrahydrodipicolinate synthase from Geobacter metallireducens (strain ATCC 53774 / DSM 7210 / GS-15).